The sequence spans 597 residues: Elongation factor 4 (597 aa).

A tr-type G domain is found at 2–184 (QHIRNFSIIA…TIVARVPAPQ (183 aa)). Residues 14 to 19 (DHGKST) and 131 to 134 (NKMD) contribute to the GTP site.

The protein belongs to the TRAFAC class translation factor GTPase superfamily. Classic translation factor GTPase family. LepA subfamily.

It is found in the cell inner membrane. The catalysed reaction is GTP + H2O = GDP + phosphate + H(+). Functionally, required for accurate and efficient protein synthesis under certain stress conditions. May act as a fidelity factor of the translation reaction, by catalyzing a one-codon backward translocation of tRNAs on improperly translocated ribosomes. Back-translocation proceeds from a post-translocation (POST) complex to a pre-translocation (PRE) complex, thus giving elongation factor G a second chance to translocate the tRNAs correctly. Binds to ribosomes in a GTP-dependent manner. The protein is Elongation factor 4 of Bordetella petrii (strain ATCC BAA-461 / DSM 12804 / CCUG 43448).